The sequence spans 104 residues: UPF0134 protein MPN_104 (104 aa).

The protein belongs to the UPF0134 family.

The protein is UPF0134 protein MPN_104 of Mycoplasma pneumoniae (strain ATCC 29342 / M129 / Subtype 1) (Mycoplasmoides pneumoniae).